The chain runs to 464 residues: Dihydrolipoyl dehydrogenase (464 aa).

FAD is bound by residues glutamate 33–cysteine 41, lysine 50, and glycine 113. A disulfide bridge links cysteine 41 with cysteine 46. NAD(+)-binding positions include glycine 178–isoleucine 182, glutamate 201, and alanine 266–phenylalanine 269. The FAD site is built by aspartate 309 and alanine 317. Residue histidine 443 is the Proton acceptor of the active site.

It belongs to the class-I pyridine nucleotide-disulfide oxidoreductase family. Homodimer. Part of the PDH complex, consisting of multiple copies of AceE (E1), DlaT (E2) and Lpd (E3), and of the BCKADH complex, consisting of multiple copies of BkdA/BkdB (E1), BkdC (E2) and Lpd (E3). It depends on FAD as a cofactor.

The protein localises to the cytoplasm. The enzyme catalyses N(6)-[(R)-dihydrolipoyl]-L-lysyl-[protein] + NAD(+) = N(6)-[(R)-lipoyl]-L-lysyl-[protein] + NADH + H(+). Its function is as follows. Lipoamide dehydrogenase is a component of the alpha-ketoacid dehydrogenase complexes. Catalyzes the reoxidation of dihydrolipoyl groups which are covalently attached to the lipoate acyltransferase components (E2) of the complexes. The sequence is that of Dihydrolipoyl dehydrogenase (lpd) from Mycobacterium bovis (strain ATCC BAA-935 / AF2122/97).